Consider the following 415-residue polypeptide: Serine hydroxymethyltransferase (415 aa).

Residues Leu115 and 119–121 each bind (6S)-5,6,7,8-tetrahydrofolate; that span reads GHL. At Lys224 the chain carries N6-(pyridoxal phosphate)lysine. Residue 348 to 350 coordinates (6S)-5,6,7,8-tetrahydrofolate; that stretch reads SPF.

This sequence belongs to the SHMT family. As to quaternary structure, homodimer. It depends on pyridoxal 5'-phosphate as a cofactor.

It is found in the cytoplasm. The catalysed reaction is (6R)-5,10-methylene-5,6,7,8-tetrahydrofolate + glycine + H2O = (6S)-5,6,7,8-tetrahydrofolate + L-serine. The protein operates within one-carbon metabolism; tetrahydrofolate interconversion. Its pathway is amino-acid biosynthesis; glycine biosynthesis; glycine from L-serine: step 1/1. In terms of biological role, catalyzes the reversible interconversion of serine and glycine with tetrahydrofolate (THF) serving as the one-carbon carrier. This reaction serves as the major source of one-carbon groups required for the biosynthesis of purines, thymidylate, methionine, and other important biomolecules. Also exhibits THF-independent aldolase activity toward beta-hydroxyamino acids, producing glycine and aldehydes, via a retro-aldol mechanism. The sequence is that of Serine hydroxymethyltransferase from Latilactobacillus sakei subsp. sakei (strain 23K) (Lactobacillus sakei subsp. sakei).